The following is an 850-amino-acid chain: Protein stoned-A (850 aa).

Residues 1–16 (MLKLPKGLKKKKKKSK) show a composition bias toward basic residues. 2 disordered regions span residues 1–95 (MLKL…AAGG) and 125–164 (KESF…LGQI). Residues 26 to 290 (ELEQYKRDLK…QNLLLSESIE (265 aa)) are interaction with Syt. Basic and acidic residues predominate over residues 28–38 (EQYKRDLKAKQ). Over residues 78–91 (ILNAQQQLSDQNQG) the composition is skewed to polar residues. Basic and acidic residues predominate over residues 136 to 164 (AEKKKQKEEEAARLEAEQQEREKQRLGQI). Residues 224–226 (DPF) carry the DPF 1 motif. Disordered regions lie at residues 345 to 375 (EEEE…EEDD) and 412 to 498 (GSWA…PPFL). The span at 431 to 440 (PPPPVRPPTG) shows a compositional bias: pro residues. Acidic residues predominate over residues 451–462 (SEDEEENPEDDP). 2 short sequence motifs (DPF) span residues 461–463 (DPF) and 535–537 (DPF). Disordered regions lie at residues 573–610 (HSLS…QRKS), 634–673 (GNEL…TSHV), 738–760 (RKKL…FDTS), and 800–825 (LGLG…IDPF). Composition is skewed to basic and acidic residues over residues 574–588 (SLSD…DQKE) and 596–607 (LEQKETDFDTAQ). 3 short sequence motifs (DPF) span residues 666 to 668 (DPF), 755 to 757 (DPF), and 823 to 825 (DPF).

Interacts with the second C2 domain of Syt.

It is found in the cytoplasm. The protein localises to the synapse. The protein resides in the cytoplasmic vesicle. Its subcellular location is the secretory vesicle. It localises to the synaptic vesicle. Functionally, adapter protein involved in endocytic recycling of synaptic vesicles membranes. May act by mediating the retrieval of synaptotagmin protein Syt from the plasma membrane, thereby facilitating the internalization of multiple synaptic vesicles from the plasma membrane. The sequence is that of Protein stoned-A (stnA) from Drosophila melanogaster (Fruit fly).